Reading from the N-terminus, the 150-residue chain is Large ribosomal subunit protein uL15 (150 aa).

The disordered stretch occupies residues 1-52 (MDLSNLKPAEGSVRKNSKRIGRGEGSGKGGTATRGHKGAKSRSGYSKKIGFE). Positions 23-32 (GEGSGKGGTA) are enriched in gly residues.

Belongs to the universal ribosomal protein uL15 family. Part of the 50S ribosomal subunit.

Binds to the 23S rRNA. The protein is Large ribosomal subunit protein uL15 of Christiangramia forsetii (strain DSM 17595 / CGMCC 1.15422 / KT0803) (Gramella forsetii).